A 392-amino-acid chain; its full sequence is Galactokinase (392 aa).

37-40 is a binding site for substrate; it reads EHTD. Residues Ser71 and 128-134 contribute to the ATP site; that span reads GSGLSSS. Ser134 and Glu166 together coordinate Mg(2+). Catalysis depends on Asp178, which acts as the Proton acceptor. Tyr228 contributes to the substrate binding site.

This sequence belongs to the GHMP kinase family. GalK subfamily.

It localises to the cytoplasm. It catalyses the reaction alpha-D-galactose + ATP = alpha-D-galactose 1-phosphate + ADP + H(+). It participates in carbohydrate metabolism; galactose metabolism. Its function is as follows. Catalyzes the transfer of the gamma-phosphate of ATP to D-galactose to form alpha-D-galactose-1-phosphate (Gal-1-P). In Streptococcus pneumoniae (strain ATCC BAA-255 / R6), this protein is Galactokinase.